The sequence spans 218 residues: Thiopurine S-methyltransferase (218 aa).

Residues Trp10, Leu45, Glu66, and Arg123 each contribute to the S-adenosyl-L-methionine site.

It belongs to the class I-like SAM-binding methyltransferase superfamily. TPMT family.

The protein resides in the cytoplasm. It carries out the reaction S-adenosyl-L-methionine + a thiopurine = S-adenosyl-L-homocysteine + a thiopurine S-methylether.. The sequence is that of Thiopurine S-methyltransferase from Pseudomonas aeruginosa (strain UCBPP-PA14).